The primary structure comprises 634 residues: UPF0329 protein ECU11_2090 (634 aa).

Basic and acidic residues-rich tracts occupy residues 354–365 and 397–407; these read REEREKREESKG and GESKEEDRGEE. The interval 354–438 is disordered; it reads REEREKREES…KGSGEKRISE (85 aa). Over residues 408–417 the composition is skewed to acidic residues; the sequence is GGVEAEDPLE.

The protein belongs to the UPF0329 family.

This is UPF0329 protein ECU11_2090 from Encephalitozoon cuniculi (strain GB-M1) (Microsporidian parasite).